Here is a 338-residue protein sequence, read N- to C-terminus: UPF0284 protein PAE0372 (338 aa).

It belongs to the UPF0284 family.

This chain is UPF0284 protein PAE0372, found in Pyrobaculum aerophilum (strain ATCC 51768 / DSM 7523 / JCM 9630 / CIP 104966 / NBRC 100827 / IM2).